A 258-amino-acid chain; its full sequence is Type III pantothenate kinase (258 aa).

Position 6–13 (6–13 (DVGNTNTV)) interacts with ATP. Substrate contacts are provided by residues tyrosine 100 and 107–110 (GADR). Aspartate 109 functions as the Proton acceptor in the catalytic mechanism. Aspartate 129 contributes to the K(+) binding site. Threonine 132 is a binding site for ATP. Residue threonine 184 participates in substrate binding.

It belongs to the type III pantothenate kinase family. Homodimer. NH4(+) is required as a cofactor. The cofactor is K(+).

The protein localises to the cytoplasm. It carries out the reaction (R)-pantothenate + ATP = (R)-4'-phosphopantothenate + ADP + H(+). The protein operates within cofactor biosynthesis; coenzyme A biosynthesis; CoA from (R)-pantothenate: step 1/5. Catalyzes the phosphorylation of pantothenate (Pan), the first step in CoA biosynthesis. The polypeptide is Type III pantothenate kinase (Bacillus licheniformis (strain ATCC 14580 / DSM 13 / JCM 2505 / CCUG 7422 / NBRC 12200 / NCIMB 9375 / NCTC 10341 / NRRL NRS-1264 / Gibson 46)).